A 345-amino-acid polypeptide reads, in one-letter code: S-adenosylmethionine:tRNA ribosyltransferase-isomerase (345 aa).

It belongs to the QueA family. Monomer.

The protein localises to the cytoplasm. It carries out the reaction 7-aminomethyl-7-carbaguanosine(34) in tRNA + S-adenosyl-L-methionine = epoxyqueuosine(34) in tRNA + adenine + L-methionine + 2 H(+). It functions in the pathway tRNA modification; tRNA-queuosine biosynthesis. Transfers and isomerizes the ribose moiety from AdoMet to the 7-aminomethyl group of 7-deazaguanine (preQ1-tRNA) to give epoxyqueuosine (oQ-tRNA). The sequence is that of S-adenosylmethionine:tRNA ribosyltransferase-isomerase from Finegoldia magna (strain ATCC 29328 / DSM 20472 / WAL 2508) (Peptostreptococcus magnus).